The following is a 381-amino-acid chain: L-lactate dehydrogenase (381 aa).

The FMN hydroxy acid dehydrogenase domain occupies 1–380 (MIISSASDYR…KPEALVDLSK (380 aa)). Tyr24 lines the substrate pocket. Positions 106 and 127 each coordinate FMN. Substrate is bound at residue Tyr129. Position 155 (Thr155) interacts with FMN. Substrate is bound at residue Arg164. Lys251 contributes to the FMN binding site. The active-site Proton acceptor is the His275. A substrate-binding site is contributed by Arg278. Residue 306 to 330 (DSGIRNGLDIVRMLALGADATMLGR) coordinates FMN.

Belongs to the FMN-dependent alpha-hydroxy acid dehydrogenase family. FMN serves as cofactor.

The protein localises to the cell inner membrane. It catalyses the reaction (S)-lactate + A = pyruvate + AH2. Catalyzes the conversion of L-lactate to pyruvate. Is coupled to the respiratory chain. The sequence is that of L-lactate dehydrogenase from Haemophilus influenzae (strain ATCC 51907 / DSM 11121 / KW20 / Rd).